A 232-amino-acid polypeptide reads, in one-letter code: Small ribosomal subunit protein uS2 (232 aa).

Belongs to the universal ribosomal protein uS2 family.

In Natranaerobius thermophilus (strain ATCC BAA-1301 / DSM 18059 / JW/NM-WN-LF), this protein is Small ribosomal subunit protein uS2.